The sequence spans 287 residues: Probable F-box protein At5g04010 (287 aa).

Residues Pro-50–Phe-101 form the F-box; degenerate domain.

The polypeptide is Probable F-box protein At5g04010 (NSFBx) (Arabidopsis thaliana (Mouse-ear cress)).